The sequence spans 151 residues: UPF0178 protein YaiI (151 aa).

This sequence belongs to the UPF0178 family.

In Salmonella paratyphi C (strain RKS4594), this protein is UPF0178 protein YaiI.